The chain runs to 200 residues: NADH-quinone oxidoreductase subunit C (200 aa).

The protein belongs to the complex I 30 kDa subunit family. NDH-1 is composed of 14 different subunits. Subunits NuoB, C, D, E, F, and G constitute the peripheral sector of the complex.

The protein localises to the cell inner membrane. The catalysed reaction is a quinone + NADH + 5 H(+)(in) = a quinol + NAD(+) + 4 H(+)(out). In terms of biological role, NDH-1 shuttles electrons from NADH, via FMN and iron-sulfur (Fe-S) centers, to quinones in the respiratory chain. The immediate electron acceptor for the enzyme in this species is believed to be ubiquinone. Couples the redox reaction to proton translocation (for every two electrons transferred, four hydrogen ions are translocated across the cytoplasmic membrane), and thus conserves the redox energy in a proton gradient. The polypeptide is NADH-quinone oxidoreductase subunit C (Rhizobium leguminosarum bv. trifolii (strain WSM2304)).